The sequence spans 290 residues: MNFVIATRRSKLAQVQTEIIIDLLNKKHDIECEKLLIETVGDKILEVSLDKIGGKGLFVKDIEVAMLEQRADAAVHSMKDVPYEMPKGFEIIAIPEREDVRDAFISLDNIKFKDLRKGAKIGTSSRRRAAQLKLLRPDLDIVPIRGNVQTRIEKIKKENLDGIILAVAGLKRVNLDHLITDYFDTKEMVPAIGQGALGIEVMEEHPKKELFKDLDHYNSKICVLAERAFMRELDGDCHSTIGAYASIKDNIMHIIGIFERKNKIIKKEITGTKDQYEKLGISLAEHILKD.

Cys237 bears the S-(dipyrrolylmethanemethyl)cysteine mark.

It belongs to the HMBS family. As to quaternary structure, monomer. The cofactor is dipyrromethane.

It catalyses the reaction 4 porphobilinogen + H2O = hydroxymethylbilane + 4 NH4(+). Its pathway is porphyrin-containing compound metabolism; protoporphyrin-IX biosynthesis; coproporphyrinogen-III from 5-aminolevulinate: step 2/4. Tetrapolymerization of the monopyrrole PBG into the hydroxymethylbilane pre-uroporphyrinogen in several discrete steps. This chain is Porphobilinogen deaminase, found in Clostridium botulinum (strain Kyoto / Type A2).